The chain runs to 38 residues: Histone H5 (38 aa).

Residues 1 to 15 (TESPIPVPAPAPAAK) are compositionally biased toward pro residues. The segment at 1-38 (TESPIPVPAPAPAAKPKPKRVSKRPASHPPYSDMIAAA) is disordered. Basic residues predominate over residues 16-26 (PKPKRVSKRPA).

It belongs to the histone H1/H5 family. As to expression, erythroid cells.

It localises to the nucleus. The protein localises to the chromosome. In terms of biological role, histone H5 performs the same function as H1, being necessary for the condensation of nucleosome chains into higher order structures, and replaces histone H1 in certain cells. In Columba livia (Rock dove), this protein is Histone H5.